A 631-amino-acid chain; its full sequence is Chaperone protein HtpG (631 aa).

The tract at residues 1–339 is a; substrate-binding; it reads MSTNQETRGF…SNDLPLNVSR (339 aa). The interval 340–555 is b; sequence EILQDNKVTS…DDQMTTQMAK (216 aa). Residues 556-631 form a c region; the sequence is LFAAAGQAMP…NTLLSKLTSH (76 aa).

This sequence belongs to the heat shock protein 90 family. As to quaternary structure, homodimer.

Its subcellular location is the cytoplasm. In terms of biological role, molecular chaperone. Has ATPase activity. The chain is Chaperone protein HtpG from Pasteurella multocida (strain Pm70).